Consider the following 80-residue polypeptide: Acyl carrier protein (80 aa).

Residues 4 to 79 (EAILEKVRSI…DAVKYIEDKQ (76 aa)) form the Carrier domain. At serine 39 the chain carries O-(pantetheine 4'-phosphoryl)serine.

This sequence belongs to the acyl carrier protein (ACP) family. 4'-phosphopantetheine is transferred from CoA to a specific serine of apo-ACP by AcpS. This modification is essential for activity because fatty acids are bound in thioester linkage to the sulfhydryl of the prosthetic group.

Its subcellular location is the cytoplasm. It participates in lipid metabolism; fatty acid biosynthesis. Its function is as follows. Carrier of the growing fatty acid chain in fatty acid biosynthesis. This chain is Acyl carrier protein, found in Prochlorococcus marinus (strain SARG / CCMP1375 / SS120).